A 325-amino-acid chain; its full sequence is Germination protease (325 aa).

Positions 1 to 7 are excised as a propeptide; sequence MYNVRTD.

The protein belongs to the peptidase A25 family. In terms of assembly, homotetramer. In terms of processing, autoproteolytically processed. The inactive tetrameric zymogen termed p46 autoprocesses to a smaller form termed p41, which is active only during spore germination.

The enzyme catalyses Endopeptidase action with P4 Glu or Asp, P1 preferably Glu &gt; Asp, P1' hydrophobic and P2' Ala.. In terms of biological role, initiates the rapid degradation of small, acid-soluble proteins during spore germination. This chain is Germination protease, found in Clostridium perfringens (strain 13 / Type A).